The following is a 629-amino-acid chain: Polygalacturonase non-catalytic subunit AroGP2 (629 aa).

An N-terminal signal peptide occupies residues 1 to 27; the sequence is MHNKILVSSYILLVLLFSLSSFNIVVA. The propeptide occupies 28–109; that stretch reads KDGDESGNPF…MCAPDLLPSL (82 aa). 7 N-linked (GlcNAc...) asparagine glycosylation sites follow: Asn125, Asn143, Asn255, Asn277, Asn333, Asn368, and Asn386. Positions 267–293 are enriched in polar residues; sequence YGQNANGENQNFTSYSTNGNNPQNNFK. The segment at 267-305 is disordered; it reads YGQNANGENQNFTSYSTNGNNPQNNFKNYGVGGNGPSET. Residues 414-628 form the BURP domain; that stretch reads FFREKMLKSG…FENDMTWATA (215 aa).

Interacts with polygalacturonase to form heterodimers.

The protein resides in the secreted. The protein localises to the extracellular space. It is found in the apoplast. It localises to the cell wall. Its function is as follows. Non-catalytic subunit of polygalacturonase. This is Polygalacturonase non-catalytic subunit AroGP2 (GP2) from Solanum lycopersicum (Tomato).